A 309-amino-acid chain; its full sequence is 2-dehydro-3-deoxygluconokinase (309 aa).

Residues 28–32 (GDTLN), Tyr88, 102–104 (YWR), and Arg170 each bind substrate. ATP-binding positions include 168-170 (NYR), 228-233 (KRGADS), and 261-264 (AAGD). Asp264 serves as a coordination point for substrate. Asp264 functions as the Proton acceptor in the catalytic mechanism.

Belongs to the carbohydrate kinase pfkB family.

It catalyses the reaction 2-dehydro-3-deoxy-D-gluconate + ATP = 2-dehydro-3-deoxy-6-phospho-D-gluconate + ADP + H(+). It participates in carbohydrate acid metabolism; 2-dehydro-3-deoxy-D-gluconate degradation; D-glyceraldehyde 3-phosphate and pyruvate from 2-dehydro-3-deoxy-D-gluconate: step 1/2. Functionally, catalyzes the phosphorylation of 2-keto-3-deoxygluconate (KDG) to produce 2-keto-3-deoxy-6-phosphogluconate (KDPG). This Escherichia coli (strain ATCC 9637 / CCM 2024 / DSM 1116 / LMG 11080 / NBRC 13500 / NCIMB 8666 / NRRL B-766 / W) protein is 2-dehydro-3-deoxygluconokinase (kdgK).